A 314-amino-acid polypeptide reads, in one-letter code: tRNA dimethylallyltransferase 2 (314 aa).

Residue 8 to 15 (GPTGSGKS) coordinates ATP. 10–15 (TGSGKS) contributes to the substrate binding site.

The protein belongs to the IPP transferase family. As to quaternary structure, monomer. It depends on Mg(2+) as a cofactor.

The enzyme catalyses adenosine(37) in tRNA + dimethylallyl diphosphate = N(6)-dimethylallyladenosine(37) in tRNA + diphosphate. In terms of biological role, catalyzes the transfer of a dimethylallyl group onto the adenine at position 37 in tRNAs that read codons beginning with uridine, leading to the formation of N6-(dimethylallyl)adenosine (i(6)A). The protein is tRNA dimethylallyltransferase 2 of Mycobacterium marinum (strain ATCC BAA-535 / M).